The following is a 388-amino-acid chain: Na(+)/H(+) antiporter NhaA (388 aa).

A run of 11 helical transmembrane segments spans residues glycine 14–threonine 34, methionine 59–valine 79, valine 95–phenylalanine 115, glycine 125–glycine 145, isoleucine 154–phenylalanine 174, leucine 179–leucine 199, valine 219–leucine 239, isoleucine 254–valine 274, isoleucine 292–leucine 312, isoleucine 328–leucine 348, and alanine 356–glycine 376.

This sequence belongs to the NhaA Na(+)/H(+) (TC 2.A.33) antiporter family.

The protein localises to the cell inner membrane. It catalyses the reaction Na(+)(in) + 2 H(+)(out) = Na(+)(out) + 2 H(+)(in). Its function is as follows. Na(+)/H(+) antiporter that extrudes sodium in exchange for external protons. The chain is Na(+)/H(+) antiporter NhaA from Salmonella arizonae (strain ATCC BAA-731 / CDC346-86 / RSK2980).